The sequence spans 375 residues: Anhydro-N-acetylmuramic acid kinase (375 aa).

12-19 provides a ligand contact to ATP; that stretch reads GTSLDGVD.

Belongs to the anhydro-N-acetylmuramic acid kinase family.

The catalysed reaction is 1,6-anhydro-N-acetyl-beta-muramate + ATP + H2O = N-acetyl-D-muramate 6-phosphate + ADP + H(+). Its pathway is amino-sugar metabolism; 1,6-anhydro-N-acetylmuramate degradation. It functions in the pathway cell wall biogenesis; peptidoglycan recycling. In terms of biological role, catalyzes the specific phosphorylation of 1,6-anhydro-N-acetylmuramic acid (anhMurNAc) with the simultaneous cleavage of the 1,6-anhydro ring, generating MurNAc-6-P. Is required for the utilization of anhMurNAc either imported from the medium or derived from its own cell wall murein, and thus plays a role in cell wall recycling. The sequence is that of Anhydro-N-acetylmuramic acid kinase from Variovorax paradoxus (strain S110).